We begin with the raw amino-acid sequence, 254 residues long: Rho-related protein racD (254 aa).

Residue 15 to 22 (GDGAVGKT) coordinates GTP. The Effector region motif lies at 37–45 (YVPTVFDNF). GTP-binding positions include 62-66 (DTAGQ) and 120-123 (TKTD). Residues 186–231 (AVTSPTSKSSGKSSPSSTSSKPSKTTTTTTTSSSSSSPPAASTAKP) show a composition bias toward low complexity. Residues 186 to 254 (AVTSPTSKSS…KDKDEKKPAK (69 aa)) are disordered. Residues 232–254 (AGEKKLSWGLFRKKDKDEKKPAK) show a composition bias toward basic and acidic residues.

Belongs to the small GTPase superfamily. Rho family.

This chain is Rho-related protein racD (racD), found in Dictyostelium discoideum (Social amoeba).